The primary structure comprises 456 residues: MVSDFFFPQPGGIESHIFQLSQRLIDLGHKVIVITHAYKDRVGVRYLTNGLTVYYVPLHTVYRETTFPSFFSFFPIFRNIVIRENIEIVHGHGSLSFLCHDAILHARTMGLKTCFTDHSLFGFADAGSIVTNKLLKFTMSDVNHVICVSHTCRENTVLRAVLNPKRVSVIPNALVAENFQPDPSKASKDFLTIVVISRLYYNKGIDLLIAVIPRICAQHPKVRFVIAGDGPKSIDLEQMREKYMLQDRVEMLGSVRHDQVRDVMVRGHIYLHPSLTEAFGTVLVEAASCGLYVISTKVGGVPEVLPSHMTRFARPEEDDLADTLSSVITDYLDHKIKTETFHEEVKQMYSWIDVAERTEKVYDSICSENNLRLIDRLKLYYGCGQWAGKLFCLLIAIDYLVMVLLEWIWPASDIDPAVDRVSSTFKISKQNFDESLVLTDPKKKTKIKTACLKDAQ.

The protein belongs to the glycosyltransferase group 1 family. Glycosyltransferase 4 subfamily. In terms of assembly, component of a Phosphatidylinositol N-acetylglucosaminyltransferase complex.

It catalyses the reaction a 1,2-diacyl-sn-glycero-3-phospho-(1D-myo-inositol) + UDP-N-acetyl-alpha-D-glucosamine = a 6-(N-acetyl-alpha-D-glucosaminyl)-1-(1,2-diacyl-sn-glycero-3-phospho)-1D-myo-inositol + UDP + H(+). It functions in the pathway glycolipid biosynthesis; glycosylphosphatidylinositol-anchor biosynthesis. Functionally, catalytic subunit in the complex catalyzing the transfer of N-acetylglucosamine from UDP-N-acetylglucosamine to phosphatidylinositol, the first step of GPI biosynthesis. This chain is Phosphatidylinositol N-acetylglucosaminyltransferase gpi3 subunit (gpi3), found in Schizosaccharomyces pombe (strain 972 / ATCC 24843) (Fission yeast).